The primary structure comprises 177 residues: Large ribosomal subunit protein uL6 (177 aa).

Belongs to the universal ribosomal protein uL6 family. In terms of assembly, part of the 50S ribosomal subunit.

This protein binds to the 23S rRNA, and is important in its secondary structure. It is located near the subunit interface in the base of the L7/L12 stalk, and near the tRNA binding site of the peptidyltransferase center. In Rickettsia felis (strain ATCC VR-1525 / URRWXCal2) (Rickettsia azadi), this protein is Large ribosomal subunit protein uL6.